Here is a 142-residue protein sequence, read N- to C-terminus: Large ribosomal subunit protein uL13 (142 aa).

It belongs to the universal ribosomal protein uL13 family. As to quaternary structure, part of the 50S ribosomal subunit.

Its function is as follows. This protein is one of the early assembly proteins of the 50S ribosomal subunit, although it is not seen to bind rRNA by itself. It is important during the early stages of 50S assembly. This chain is Large ribosomal subunit protein uL13, found in Helicobacter hepaticus (strain ATCC 51449 / 3B1).